The following is a 633-amino-acid chain: Phospholipid--sterol O-acyltransferase (633 aa).

The Cytoplasmic segment spans residues M1–K6. Residues S7 to E29 traverse the membrane as a helical; Signal-anchor for type II membrane protein segment. Residues D30–I633 lie on the Lumenal side of the membrane. S195 serves as the catalytic Acyl-ester intermediate. Residues D461 and H505 each act as charge relay system in the active site.

It belongs to the AB hydrolase superfamily. Lipase family.

The protein resides in the microsome membrane. In terms of biological role, involved in lipid catabolism. Essential for sterol esters biosynthesis in leaves and seeds, but not in flowers. Plays a role in controlling the free sterol content of leaves. Catalyzes the transacylation of acyl groups from phospholipids to a variety of different sterols. Prefers phosphatidylethanolamine over phosphatidylcholine as an acyl donor. Not active toward neutral lipids. Highly specific for position sn-2, which in plant lipids is essentially devoid of saturated acyl groups. Broad sterol specificity (cholesterol &gt; campesterol &gt; sitosterol &gt; stigmasterol), but no activity with lupeol or beta-amyrin. The protein is Phospholipid--sterol O-acyltransferase (PSAT) of Arabidopsis thaliana (Mouse-ear cress).